The chain runs to 364 residues: Tripartite motif-containing protein 54 (364 aa).

The RING-type zinc-finger motif lies at 26–82 (CPICLEMFSKPVVILPCQHNLCRKCANDVFQASNPLWQSRGSTTVSSGGRFRCPSCR). The segment at 121 to 163 (EQHLMCEEHEDEKINIYCLSCEVPTCSLCKVFGAHKDCEVAPL) adopts a B box-type zinc-finger fold. The Zn(2+) site is built by Cys126, His129, Cys149, and His155. The mediates microtubule-binding and homooligomerization stretch occupies residues 168-211 (KRQKSELSDGIAMLVAGNDRVQAVITQMEEVCQTIEDNSRRQKQ). A coiled-coil region spans residues 194 to 252 (QMEEVCQTIEDNSRRQKQLLNQKFETLCAVLEERKGELLQALARVQEEKLQRVRSLIRQ). Positions 271-329 (MEEPQMALYLQQAKELINKVGAMSKVELAGRPEPGYESMEQFSVIVEHVAEMLRTIDFQ) constitute a COS domain. The segment at 328-364 (FQPGASGDEEDDEVTLDGEEGNTGLEEERLDGPEGLH) is disordered. Positions 334–347 (GDEEDDEVTLDGEE) are enriched in acidic residues. The span at 353 to 364 (EEERLDGPEGLH) shows a compositional bias: basic and acidic residues.

Homooligomer and heterooligomer. Interacts with TRIM63 and probably with TRIM55. Interacts with tubulin.

The protein localises to the cytoplasm. It is found in the cytoskeleton. Its subcellular location is the myofibril. The protein resides in the sarcomere. It localises to the z line. May bind and stabilize microtubules during myotubes formation. In Rattus norvegicus (Rat), this protein is Tripartite motif-containing protein 54 (Trim54).